Here is a 270-residue protein sequence, read N- to C-terminus: ATP synthase subunit a 1 (270 aa).

5 helical membrane-spanning segments follow: residues valine 38–tyrosine 58, isoleucine 98–valine 118, aspartate 143–isoleucine 163, leucine 208–tryptophan 228, and alanine 239–valine 259.

It belongs to the ATPase A chain family. In terms of assembly, F-type ATPases have 2 components, CF(1) - the catalytic core - and CF(0) - the membrane proton channel. CF(1) has five subunits: alpha(3), beta(3), gamma(1), delta(1), epsilon(1). CF(0) has three main subunits: a(1), b(2) and c(9-12). The alpha and beta chains form an alternating ring which encloses part of the gamma chain. CF(1) is attached to CF(0) by a central stalk formed by the gamma and epsilon chains, while a peripheral stalk is formed by the delta and b chains.

Its subcellular location is the cell inner membrane. Its function is as follows. Key component of the proton channel; it plays a direct role in the translocation of protons across the membrane. The chain is ATP synthase subunit a 1 from Vibrio campbellii (strain ATCC BAA-1116).